The primary structure comprises 480 residues: Glycogen synthase (480 aa).

Residue lysine 15 coordinates ADP-alpha-D-glucose.

It belongs to the glycosyltransferase 1 family. Bacterial/plant glycogen synthase subfamily.

It catalyses the reaction [(1-&gt;4)-alpha-D-glucosyl](n) + ADP-alpha-D-glucose = [(1-&gt;4)-alpha-D-glucosyl](n+1) + ADP + H(+). The protein operates within glycan biosynthesis; glycogen biosynthesis. Synthesizes alpha-1,4-glucan chains using ADP-glucose. The protein is Glycogen synthase of Rhizobium leguminosarum bv. trifolii (strain WSM2304).